The chain runs to 276 residues: NH(3)-dependent NAD(+) synthetase (276 aa).

An ATP-binding site is contributed by 43–50 (GISGGVDS). Aspartate 49 is a binding site for Mg(2+). Position 146 (arginine 146) interacts with deamido-NAD(+). Threonine 166 is a binding site for ATP. Residue glutamate 171 coordinates Mg(2+). Residues lysine 179 and aspartate 186 each contribute to the deamido-NAD(+) site. 2 residues coordinate ATP: lysine 195 and threonine 217. 266–267 (HK) is a deamido-NAD(+) binding site.

The protein belongs to the NAD synthetase family. Homodimer.

It catalyses the reaction deamido-NAD(+) + NH4(+) + ATP = AMP + diphosphate + NAD(+) + H(+). It participates in cofactor biosynthesis; NAD(+) biosynthesis; NAD(+) from deamido-NAD(+) (ammonia route): step 1/1. Functionally, catalyzes the ATP-dependent amidation of deamido-NAD to form NAD. Uses ammonia as a nitrogen source. This chain is NH(3)-dependent NAD(+) synthetase, found in Shewanella sediminis (strain HAW-EB3).